Reading from the N-terminus, the 377-residue chain is Succinyl-diaminopimelate desuccinylase (377 aa).

Position 66 (His66) interacts with Zn(2+). Asp68 is a catalytic residue. Asp99 contacts Zn(2+). Glu133 acts as the Proton acceptor in catalysis. 3 residues coordinate Zn(2+): Glu134, Glu162, and His348.

This sequence belongs to the peptidase M20A family. DapE subfamily. Homodimer. It depends on Zn(2+) as a cofactor. Co(2+) is required as a cofactor.

The catalysed reaction is N-succinyl-(2S,6S)-2,6-diaminopimelate + H2O = (2S,6S)-2,6-diaminopimelate + succinate. It participates in amino-acid biosynthesis; L-lysine biosynthesis via DAP pathway; LL-2,6-diaminopimelate from (S)-tetrahydrodipicolinate (succinylase route): step 3/3. In terms of biological role, catalyzes the hydrolysis of N-succinyl-L,L-diaminopimelic acid (SDAP), forming succinate and LL-2,6-diaminopimelate (DAP), an intermediate involved in the bacterial biosynthesis of lysine and meso-diaminopimelic acid, an essential component of bacterial cell walls. The chain is Succinyl-diaminopimelate desuccinylase from Xylella fastidiosa (strain M12).